A 194-amino-acid polypeptide reads, in one-letter code: Mpv17-like protein (194 aa).

Topologically, residues 1 to 14 (MASWWRAFPQAARR) are cytoplasmic. A helical transmembrane segment spans residues 15 to 34 (YPWPTNVLLYAGLFSAGDAL). A targeting to peroxisomes region spans residues 16–55 (PWPTNVLLYAGLFSAGDALQQRLRGGPADWRQTRRVATLA). Topologically, residues 35-50 (QQRLRGGPADWRQTRR) are lumenal. The chain crosses the membrane as a helical span at residues 51–67 (VATLAVTFHGNFNYVWL). At 68-91 (RLLERALPGRAPRTVLAKVLCDQT) the chain is on the cytoplasmic side. Residues 92 to 110 (VGGPIALSAFYVGMSVLQG) traverse the membrane as a helical segment. The Lumenal portion of the chain corresponds to 111 to 150 (KDDIFLDLKQKFWNTYKSGLMYWPFVQLTNFSLVPVHWRT). The helical transmembrane segment at 151–168 (AYTGLCAFLWATFLCFSQ) threads the bilayer. Residues 169–194 (QSGDGTLQSIFIFLRRKEASDKSPEK) are Cytoplasmic-facing.

It belongs to the peroxisomal membrane protein PXMP2/4 family. In terms of tissue distribution, isoform 1 and isoform 3 are expressed in the kidney (at protein level). Isoform 1 is expressed in the kidney, spleen, heart, brain, lung and liver. Isoform 3 is expressed in the kidney. Isoform 1 and isoform 3 expression increase during development, reache their highest level in adulthood and decrease with aging.

It is found in the peroxisome membrane. The protein localises to the cytoplasm. Participates in reactive oxygen species metabolism by up- or down-regulation of the genes of antioxidant enzymes. Protective against the mitochondrial apoptotic cascade. In terms of biological role, participates in reactive oxygen species metabolism by up- or down-regulation of the genes of antioxidant enzymes. The protein is Mpv17-like protein (Mpv17l) of Mus musculus (Mouse).